A 527-amino-acid polypeptide reads, in one-letter code: Cytochrome P450 monooxygenase olcJ (527 aa).

Residues 21–43 (GLLTRYNVFMAISITVTALYLIH) traverse the membrane as a helical segment. Cysteine 464 contributes to the heme binding site.

This sequence belongs to the cytochrome P450 family. Heme is required as a cofactor.

Its subcellular location is the membrane. Its pathway is secondary metabolite biosynthesis; terpenoid biosynthesis. Its function is as follows. Cytochrome P450 monooxygenase; part of the gene cluster that mediates the biosynthesis of 15-deoxyoxalicine B. The first step of the pathway is the synthesis of nicotinyl-CoA from nicotinic acid by the nicotinic acid-CoA ligase olcI. Nicotinyl-CoA is then a substrate of polyketide synthase olcA to produce 4-hydroxy-6-(3-pyridinyl)-2H-pyran-2-one (HPPO) which is further prenylated by the polyprenyl transferase olcH to yield geranylgeranyl-HPPO. Geranylgeranyl pyrophosphate is provided by the cluster-specific geranylgeranyl pyrophosphate synthase olcC. The FAD-dependent monooxygenase olcE catalyzes the epoxidation of geranylgeranyl-HPPO and the terpene cyclase olcD catalyzes the cyclization of the terpenoid component, resulting in the formation of the tricyclic terpene moiety seen in predecaturin E. The cytochrome P450 monooxygenase then catalyzes the allylic oxidation of predecaturin E, which is followed by spirocylization with concomitant loss of one molecule of water to form decaturin E. Decaturin E is the substrate of the cytochrome P450 monooxygenase olcJ which hydroxylates it at the C-29 position to form decaturin F. The short-chain dehydrogenase/reductase olcF may catalyze the oxidation of decaturin F to generate the 29-hydroxyl-27-one intermediate, and subsequent hemiacetal formation probably leads to the formation of decaturin C. The dioxygenase olcK may be a peroxisomal enzyme that catalyzes the hydroxylation of decaturin C into decaturin A once decaturin C is shuttled into the peroxisome by the MFS transporter olcL. Finally the cytochrome P450 monooxygenase olcB catalyzes the oxidative rearrangement to yield 15-deoxyoxalicine B. In the absence of olcJ, decaturin E may be shunted to a pathway in which it is oxidized to a ketone, possibly by olcF, to form decaturin D, which undergoes further allylic oxidation to yield decaturin G. Moreover, in the absence of oclK or oclL, oclB can convert decaturin C into 15-deoxyoxalicine A. The polypeptide is Cytochrome P450 monooxygenase olcJ (Penicillium canescens).